Consider the following 404-residue polypeptide: Cysteine desulfurase IscS (404 aa).

Pyridoxal 5'-phosphate-binding positions include 75–76 (AT), Asn-155, Gln-183, and 203–205 (SGH). At Lys-206 the chain carries N6-(pyridoxal phosphate)lysine. Thr-243 is a binding site for pyridoxal 5'-phosphate. Cys-328 serves as the catalytic Cysteine persulfide intermediate. Cys-328 contacts [2Fe-2S] cluster.

Belongs to the class-V pyridoxal-phosphate-dependent aminotransferase family. NifS/IscS subfamily. Homodimer. Forms a heterotetramer with IscU, interacts with other sulfur acceptors. It depends on pyridoxal 5'-phosphate as a cofactor.

It localises to the cytoplasm. The catalysed reaction is (sulfur carrier)-H + L-cysteine = (sulfur carrier)-SH + L-alanine. It functions in the pathway cofactor biosynthesis; iron-sulfur cluster biosynthesis. Functionally, master enzyme that delivers sulfur to a number of partners involved in Fe-S cluster assembly, tRNA modification or cofactor biosynthesis. Catalyzes the removal of elemental sulfur atoms from cysteine to produce alanine. Functions as a sulfur delivery protein for Fe-S cluster synthesis onto IscU, an Fe-S scaffold assembly protein, as well as other S acceptor proteins. The sequence is that of Cysteine desulfurase IscS from Edwardsiella ictaluri (strain 93-146).